Reading from the N-terminus, the 245-residue chain is Probable transcriptional regulatory protein Cbei_4222 (245 aa).

This sequence belongs to the TACO1 family.

Its subcellular location is the cytoplasm. This Clostridium beijerinckii (strain ATCC 51743 / NCIMB 8052) (Clostridium acetobutylicum) protein is Probable transcriptional regulatory protein Cbei_4222.